Here is a 187-residue protein sequence, read N- to C-terminus: UPF0669 protein C6orf120 homolog (187 aa).

Positions Met1 to Cys23 are cleaved as a signal peptide. Residue Asn47 is glycosylated (N-linked (GlcNAc...) asparagine).

This sequence belongs to the UPF0669 family.

It localises to the secreted. The polypeptide is UPF0669 protein C6orf120 homolog (Xenopus tropicalis (Western clawed frog)).